Reading from the N-terminus, the 176-residue chain is MPMRPLVIVPDPILREISKPVEYIDSAVQKLADDMLETMYHAQGVGLAAIQIGIPLRMLVLDVSRNDEQKNPLVIINPEVLWLSDERNIYKEGCLSIPEYFAEVERPKRLCVRYQNREGKQTEIEADDLLATCLQHEIDHLNGRLFIDYLSKIKRDMVIRKFKKRAKEKNTQEAVL.

Fe cation is bound by residues cysteine 94 and histidine 136. Residue glutamate 137 is part of the active site. Histidine 140 contacts Fe cation.

This sequence belongs to the polypeptide deformylase family. Fe(2+) is required as a cofactor.

The enzyme catalyses N-terminal N-formyl-L-methionyl-[peptide] + H2O = N-terminal L-methionyl-[peptide] + formate. In terms of biological role, removes the formyl group from the N-terminal Met of newly synthesized proteins. Requires at least a dipeptide for an efficient rate of reaction. N-terminal L-methionine is a prerequisite for activity but the enzyme has broad specificity at other positions. This is Peptide deformylase from Bartonella henselae (strain ATCC 49882 / DSM 28221 / CCUG 30454 / Houston 1) (Rochalimaea henselae).